The primary structure comprises 242 residues: Orotidine 5'-phosphate decarboxylase (242 aa).

Residues Asp21, Lys43, 71-80 (DLKFFDVPET), Thr124, Arg185, Gln195, Gly215, and Arg216 each bind substrate. Lys73 acts as the Proton donor in catalysis.

It belongs to the OMP decarboxylase family. Type 1 subfamily. In terms of assembly, homodimer.

The enzyme catalyses orotidine 5'-phosphate + H(+) = UMP + CO2. It participates in pyrimidine metabolism; UMP biosynthesis via de novo pathway; UMP from orotate: step 2/2. Functionally, catalyzes the decarboxylation of orotidine 5'-monophosphate (OMP) to uridine 5'-monophosphate (UMP). The polypeptide is Orotidine 5'-phosphate decarboxylase (Methylococcus capsulatus (strain ATCC 33009 / NCIMB 11132 / Bath)).